The primary structure comprises 137 residues: CUB domain-containing protein (137 aa).

The first 21 residues, 1-21 (MRLSRAFAWPLLCSIATTVKA), serve as a signal peptide directing secretion. 2 cysteine pairs are disulfide-bonded: Cys30/Cys51 and Cys75/Cys96. A CUB domain is found at 30-132 (CGGHYTDEYG…TFFEIYYFVD (103 aa)).

The sequence is that of CUB domain-containing protein from Homo sapiens (Human).